We begin with the raw amino-acid sequence, 843 residues long: Protein P (843 aa).

Residues 1 to 177 (MPLSYQHFRK…FCGSPYSWEQ (177 aa)) are terminal protein domain (TP). A spacer region spans residues 178–346 (DLQHGRLVFQ…YCLYHIVNLI (169 aa)). Positions 219-250 (RKSRLGPQPAQGQLAGRQQGGSGSIRARVHPS) are disordered. Over residues 223–235 (LGPQPAQGQLAGR) the composition is skewed to low complexity. The segment at 347 to 690 (EDWGPCTEHG…YLNLYPVARQ (344 aa)) is polymerase/reverse transcriptase domain (RT). Residues 357–600 (EHRIRTPRTP…YSLNFMGYVI (244 aa)) form the Reverse transcriptase domain. Residues D429, D551, and D552 each contribute to the Mg(2+) site.

This sequence belongs to the hepadnaviridae P protein family.

The enzyme catalyses DNA(n) + a 2'-deoxyribonucleoside 5'-triphosphate = DNA(n+1) + diphosphate. The catalysed reaction is Endonucleolytic cleavage to 5'-phosphomonoester.. With respect to regulation, activated by host HSP70 and HSP40 in vitro to be able to bind the epsilon loop of the pgRNA. Because deletion of the RNase H region renders the protein partly chaperone-independent, the chaperones may be needed indirectly to relieve occlusion of the RNA-binding site by this domain. Inhibited by several reverse-transcriptase inhibitors: Lamivudine, Adefovir and Entecavir. In terms of biological role, multifunctional enzyme that converts the viral RNA genome into dsDNA in viral cytoplasmic capsids. This enzyme displays a DNA polymerase activity that can copy either DNA or RNA templates, and a ribonuclease H (RNase H) activity that cleaves the RNA strand of RNA-DNA heteroduplexes in a partially processive 3'- to 5'-endonucleasic mode. Neo-synthesized pregenomic RNA (pgRNA) are encapsidated together with the P protein, and reverse-transcribed inside the nucleocapsid. Initiation of reverse-transcription occurs first by binding the epsilon loop on the pgRNA genome, and is initiated by protein priming, thereby the 5'-end of (-)DNA is covalently linked to P protein. Partial (+)DNA is synthesized from the (-)DNA template and generates the relaxed circular DNA (RC-DNA) genome. After budding and infection, the RC-DNA migrates in the nucleus, and is converted into a plasmid-like covalently closed circular DNA (cccDNA). The activity of P protein does not seem to be necessary for cccDNA generation, and is presumably released from (+)DNA by host nuclear DNA repair machinery. The protein is Protein P of Hepatitis B virus genotype B2 (isolate Vietnam/16091/1992) (HBV-B).